The chain runs to 347 residues: GMP reductase (347 aa).

108 to 131 (ADFEKTKQILDLNPALNFVCIDVA) serves as a coordination point for NADP(+). K(+)-binding residues include Gly-181 and Gly-183. Cys-186 functions as the Thioimidate intermediate in the catalytic mechanism. NADP(+) is bound at residue 216 to 239 (IVSDGGCTTPGDVAKAFGGGADFV).

This sequence belongs to the IMPDH/GMPR family. GuaC type 1 subfamily. As to quaternary structure, homotetramer.

The catalysed reaction is IMP + NH4(+) + NADP(+) = GMP + NADPH + 2 H(+). Catalyzes the irreversible NADPH-dependent deamination of GMP to IMP. It functions in the conversion of nucleobase, nucleoside and nucleotide derivatives of G to A nucleotides, and in maintaining the intracellular balance of A and G nucleotides. The chain is GMP reductase from Escherichia coli (strain SMS-3-5 / SECEC).